Here is a 158-residue protein sequence, read N- to C-terminus: NADH-quinone oxidoreductase subunit B (158 aa).

Positions 36, 37, 101, and 131 each coordinate [4Fe-4S] cluster.

The protein belongs to the complex I 20 kDa subunit family. NDH-1 is composed of 14 different subunits. Subunits NuoB, C, D, E, F, and G constitute the peripheral sector of the complex. The cofactor is [4Fe-4S] cluster.

Its subcellular location is the cell inner membrane. It catalyses the reaction a quinone + NADH + 5 H(+)(in) = a quinol + NAD(+) + 4 H(+)(out). Its function is as follows. NDH-1 shuttles electrons from NADH, via FMN and iron-sulfur (Fe-S) centers, to quinones in the respiratory chain. The immediate electron acceptor for the enzyme in this species is believed to be ubiquinone. Couples the redox reaction to proton translocation (for every two electrons transferred, four hydrogen ions are translocated across the cytoplasmic membrane), and thus conserves the redox energy in a proton gradient. The polypeptide is NADH-quinone oxidoreductase subunit B (Francisella tularensis subsp. tularensis (strain FSC 198)).